We begin with the raw amino-acid sequence, 240 residues long: Proteasome subunit alpha (240 aa).

It belongs to the peptidase T1A family. In terms of assembly, the 20S proteasome core is composed of 14 alpha and 14 beta subunits that assemble into four stacked heptameric rings, resulting in a barrel-shaped structure. The two inner rings, each composed of seven catalytic beta subunits, are sandwiched by two outer rings, each composed of seven alpha subunits. The catalytic chamber with the active sites is on the inside of the barrel. Has a gated structure, the ends of the cylinder being occluded by the N-termini of the alpha-subunits. Is capped by the proteasome-associated ATPase, ARC.

The protein localises to the cytoplasm. Its pathway is protein degradation; proteasomal Pup-dependent pathway. With respect to regulation, the formation of the proteasomal ATPase ARC-20S proteasome complex, likely via the docking of the C-termini of ARC into the intersubunit pockets in the alpha-rings, may trigger opening of the gate for substrate entry. Interconversion between the open-gate and close-gate conformations leads to a dynamic regulation of the 20S proteasome proteolysis activity. In terms of biological role, component of the proteasome core, a large protease complex with broad specificity involved in protein degradation. In Frankia casuarinae (strain DSM 45818 / CECT 9043 / HFP020203 / CcI3), this protein is Proteasome subunit alpha.